Here is a 307-residue protein sequence, read N- to C-terminus: Mitochondrial 2-oxodicarboxylate carrier 2 (307 aa).

6 helical membrane-spanning segments follow: residues 10 to 30, 76 to 95, 122 to 142, 171 to 191, 215 to 235, and 280 to 300; these read LPFI…LTVM, SRLY…KRAT, IAAG…FELI, GLYK…GGYF, LIAG…FDVV, and CRLA…MNFF. Solcar repeat units follow at residues 10–106, 116–200, and 209–299; these read LPFI…YQKI, TTQK…VRNS, and QKTR…MMNF.

This sequence belongs to the mitochondrial carrier (TC 2.A.29) family.

Its subcellular location is the mitochondrion inner membrane. Its function is as follows. Transports C5-C7 oxodicarboxylates across the inner membranes of mitochondria. Can transport 2-oxoadipate, 2-oxoglutarate, adipate, glutarate, 2-oxopimelate, oxaloacetate, citrate and malate. The main physiological role is probably to supply 2-oxoadipate and 2-oxoglutarate from the mitochondrial matrix to the cytosol where they are used in the biosynthesis of lysine and glutamate, respectively, and in lysine catabolism. The protein is Mitochondrial 2-oxodicarboxylate carrier 2 (ODC2) of Saccharomyces cerevisiae (strain ATCC 204508 / S288c) (Baker's yeast).